Reading from the N-terminus, the 665-residue chain is BTB/POZ domain-containing protein At1g30440 (665 aa).

In terms of domain architecture, BTB spans 28-98; the sequence is SDIVVEVGEM…CYGVKLELTA (71 aa). Positions 214-508 constitute an NPH3 domain; it reads DWWYEDASML…VQVLFFEQLQ (295 aa). Residues 260 to 280 form a disordered region; sequence LKRRRGGPESSGRFSTPLGSG. Polar residues predominate over residues 271–280; that stretch reads GRFSTPLGSG. At Ser279 the chain carries Phosphoserine. The stretch at 281-306 forms a coiled coil; it reads NVLSEEEQKNLLEEIQELLRMQKGLV. The residue at position 449 (Tyr449) is a Phosphotyrosine. Polar residues predominate over residues 626 to 639; the sequence is SAQEGSVSKSNNEN. Residues 626 to 665 are disordered; it reads SAQEGSVSKSNNENVKIEKLKDVKERRGKHKKASSISSER. Residues 640-650 show a composition bias toward basic and acidic residues; that stretch reads VKIEKLKDVKE.

Belongs to the NPH3 family.

The protein operates within protein modification; protein ubiquitination. May act as a substrate-specific adapter of an E3 ubiquitin-protein ligase complex (CUL3-RBX1-BTB) which mediates the ubiquitination and subsequent proteasomal degradation of target proteins. This is BTB/POZ domain-containing protein At1g30440 from Arabidopsis thaliana (Mouse-ear cress).